The sequence spans 248 residues: MTRYKAIISYDGSGFYGYQVQPNTRTVQAEIEKALTKMHKGKTVRVTASGRTDTGVHAKGQVIHFDSELDITAEKFQKALQVMTPFDISFLTVEEVPDDFHARFGTVGKEYRYVVKRTKIFDPFSRNFALHYPYELDISKMKLASKRLIGEHDFTSFCSARTERDSKVRTLYSIDFYEEDDETLVIAFQGNGFLYNMVRILTGTLLDAGQGRISPDDISEALLARDRQKLISKTAPPQGLYLWRVDYE.

Aspartate 53 acts as the Nucleophile in catalysis. Tyrosine 111 lines the substrate pocket.

This sequence belongs to the tRNA pseudouridine synthase TruA family. As to quaternary structure, homodimer.

The catalysed reaction is uridine(38/39/40) in tRNA = pseudouridine(38/39/40) in tRNA. Functionally, formation of pseudouridine at positions 38, 39 and 40 in the anticodon stem and loop of transfer RNAs. The protein is tRNA pseudouridine synthase A of Listeria monocytogenes serovar 1/2a (strain ATCC BAA-679 / EGD-e).